The chain runs to 224 residues: Serum amyloid P-component (224 aa).

An N-terminal signal peptide occupies residues 1 to 19 (MNKLMSWVSVLIILPEAFA). Positions 24–224 (RGKVFVFPRE…YVIVKPMVWG (201 aa)) constitute a Pentraxin (PTX) domain. A glycan (N-linked (GlcNAc...) asparagine) is linked at N51. C55 and C114 are disulfide-bonded. Residues D77, N78, E155, Q156, and D157 each coordinate Ca(2+). N166 carries an N-linked (GlcNAc...) asparagine glycan. Q167 provides a ligand contact to Ca(2+).

Belongs to the pentraxin family. In terms of assembly, homopentamer. Pentraxin (or pentaxin) have a discoid arrangement of 5 non-covalently bound subunits. Ca(2+) serves as cofactor.

It localises to the secreted. The polypeptide is Serum amyloid P-component (APCS) (Bos taurus (Bovine)).